The following is a 108-amino-acid chain: uncharacterized protein (108 aa).

The N-myristoyl glycine; by host moiety is linked to residue Gly2.

This is an uncharacterized protein from Acanthamoeba polyphaga (Amoeba).